A 105-amino-acid chain; its full sequence is Large ribosomal subunit protein mL49 (105 aa).

A mitochondrion-targeting transit peptide spans 1–15 (MRSSLKPVLSNLRFN).

The protein belongs to the mitochondrion-specific ribosomal protein mL49 family. Component of the mitochondrial large ribosomal subunit (mt-LSU). Mature yeast 74S mitochondrial ribosomes consist of a small (37S) and a large (54S) subunit. The 37S small subunit contains a 15S ribosomal RNA (15S mt-rRNA) and at least 32 different proteins. The 54S large subunit contains a 21S rRNA (21S mt-rRNA) and at least 45 different proteins.

The protein localises to the mitochondrion. In terms of biological role, component of the mitochondrial ribosome (mitoribosome), a dedicated translation machinery responsible for the synthesis of mitochondrial genome-encoded proteins, including at least some of the essential transmembrane subunits of the mitochondrial respiratory chain. The mitoribosomes are attached to the mitochondrial inner membrane and translation products are cotranslationally integrated into the membrane. The sequence is that of Large ribosomal subunit protein mL49 (img2) from Schizosaccharomyces pombe (strain 972 / ATCC 24843) (Fission yeast).